Consider the following 959-residue polypeptide: Isoleucine--tRNA ligase (959 aa).

A 'HIGH' region motif is present at residues 66-76; that stretch reads PYANGDIHIGH. Position 592 (Glu-592) interacts with L-isoleucyl-5'-AMP. The 'KMSKS' region motif lies at 633 to 637; that stretch reads KMSKS. Lys-636 contacts ATP. Zn(2+) is bound by residues Cys-922, Cys-925, Cys-942, and Cys-945.

This sequence belongs to the class-I aminoacyl-tRNA synthetase family. IleS type 1 subfamily. In terms of assembly, monomer. It depends on Zn(2+) as a cofactor.

The protein resides in the cytoplasm. The enzyme catalyses tRNA(Ile) + L-isoleucine + ATP = L-isoleucyl-tRNA(Ile) + AMP + diphosphate. Functionally, catalyzes the attachment of isoleucine to tRNA(Ile). As IleRS can inadvertently accommodate and process structurally similar amino acids such as valine, to avoid such errors it has two additional distinct tRNA(Ile)-dependent editing activities. One activity is designated as 'pretransfer' editing and involves the hydrolysis of activated Val-AMP. The other activity is designated 'posttransfer' editing and involves deacylation of mischarged Val-tRNA(Ile). The sequence is that of Isoleucine--tRNA ligase from Cupriavidus metallidurans (strain ATCC 43123 / DSM 2839 / NBRC 102507 / CH34) (Ralstonia metallidurans).